Consider the following 464-residue polypeptide: Glycine receptor subunit alpha-3 (464 aa).

Residues 1-33 (MAHVRHFRTLVSGFYFWEAALLLSLVATKETNS) form the signal peptide. The Extracellular portion of the chain corresponds to 34-255 (ARSRSAPMSP…RFHLERQMGY (222 aa)). N-linked (GlcNAc...) asparagine glycosylation occurs at asparagine 71. Cysteine 171 and cysteine 185 are disulfide-bonded. Zn(2+)-binding residues include glutamate 225 and aspartate 227. Cysteine 231 and cysteine 242 form a disulfide bridge. 235–240 (YNTGKF) contributes to the strychnine binding site. Zn(2+) is bound at residue histidine 248. The chain crosses the membrane as a helical span at residues 256-277 (YLIQMYIPSLLIVILSWVSFWI). At 278–282 (NMDAA) the chain is on the cytoplasmic side. The helical transmembrane segment at 283–303 (PARVALGITTVLTMTTQSSGS) threads the bilayer. Over 304 to 314 (RASLPKVSYVK) the chain is Extracellular. A helical membrane pass occupies residues 315–335 (AIDIWMAVCLLFVFSALLEYA). Residues 336 to 430 (AVNFVSRQHK…FIDRAKKIDT (95 aa)) lie on the Cytoplasmic side of the membrane. At serine 370 the chain carries Phosphoserine. At serine 379 the chain carries Phosphoserine; by PKA. Residues 431-451 (ISRACFPLAFLIFNIFYWVIY) form a helical membrane-spanning segment. Residues 452–464 (KILRHEDIHQQQD) lie on the Extracellular side of the membrane.

This sequence belongs to the ligand-gated ion channel (TC 1.A.9) family. Glycine receptor (TC 1.A.9.3) subfamily. GLRA3 sub-subfamily. As to quaternary structure, homopentamer (in vitro). Heteropentamer composed of GLRA3 and GLRB. Both homopentamers and heteropentamers form functional ion channels, but their characteristics are subtly different. Phosphorylated by PKA; this causes down-regulation of channel activity. Dephosphorylated in response to activation of HTR1A signaling; this increases channel activity. As to expression, detected in brainstem, also in neurons that control rhythmic breathing. Detected in superficial laminae of the dorsal horn of the thoracic spinal cord. Detected in dentate gyrus in hippocampus, especially in stratum granulare. Detected in the inner plexiform layer in the retina (at protein level). Detected in midbrain, thalamus, brain cortex, hippocampus, and at lower levels in cerebellum.

The protein localises to the postsynaptic cell membrane. Its subcellular location is the synapse. The protein resides in the perikaryon. It is found in the cell projection. It localises to the dendrite. The protein localises to the cell membrane. The enzyme catalyses chloride(in) = chloride(out). Inhibited by prostaglandin E2, probably via PKA-mediated phosphorylation at Ser-379. Functionally, glycine receptors are ligand-gated chloride channels. Channel opening is triggered by extracellular glycine. Channel characteristics depend on the subunit composition; heteropentameric channels display faster channel closure. Plays an important role in the down-regulation of neuronal excitability. Contributes to the generation of inhibitory postsynaptic currents. Contributes to increased pain perception in response to increased prostaglandin E2 levels. Plays a role in the regulation of breathing rhythm, especially of the duration of the postinspiratory phase. Plays a role in cellular responses to ethanol. This Mus musculus (Mouse) protein is Glycine receptor subunit alpha-3 (Glra3).